Consider the following 201-residue polypeptide: ATP-dependent Clp protease proteolytic subunit (201 aa).

Ser-97 (nucleophile) is an active-site residue. His-122 is a catalytic residue.

This sequence belongs to the peptidase S14 family. In terms of assembly, fourteen ClpP subunits assemble into 2 heptameric rings which stack back to back to give a disk-like structure with a central cavity, resembling the structure of eukaryotic proteasomes.

It localises to the cytoplasm. It carries out the reaction Hydrolysis of proteins to small peptides in the presence of ATP and magnesium. alpha-casein is the usual test substrate. In the absence of ATP, only oligopeptides shorter than five residues are hydrolyzed (such as succinyl-Leu-Tyr-|-NHMec, and Leu-Tyr-Leu-|-Tyr-Trp, in which cleavage of the -Tyr-|-Leu- and -Tyr-|-Trp bonds also occurs).. Functionally, cleaves peptides in various proteins in a process that requires ATP hydrolysis. Has a chymotrypsin-like activity. Plays a major role in the degradation of misfolded proteins. The chain is ATP-dependent Clp protease proteolytic subunit from Nitratidesulfovibrio vulgaris (strain DSM 19637 / Miyazaki F) (Desulfovibrio vulgaris).